The primary structure comprises 142 residues: Large ribosomal subunit protein uL13 (142 aa).

This sequence belongs to the universal ribosomal protein uL13 family. In terms of assembly, part of the 50S ribosomal subunit.

In terms of biological role, this protein is one of the early assembly proteins of the 50S ribosomal subunit, although it is not seen to bind rRNA by itself. It is important during the early stages of 50S assembly. The chain is Large ribosomal subunit protein uL13 from Serratia proteamaculans (strain 568).